The primary structure comprises 368 residues: 3-dehydroquinate synthase (368 aa).

NAD(+)-binding positions include 71–76, 105–109, 129–130, Lys-142, Lys-151, and 169–172; these read DGESFK, GVIGD, TT, and TLRT. Residues Glu-184, His-247, and His-264 each coordinate Zn(2+).

Belongs to the sugar phosphate cyclases superfamily. Dehydroquinate synthase family. NAD(+) is required as a cofactor. Requires Co(2+) as cofactor. It depends on Zn(2+) as a cofactor.

The protein localises to the cytoplasm. The enzyme catalyses 7-phospho-2-dehydro-3-deoxy-D-arabino-heptonate = 3-dehydroquinate + phosphate. Its pathway is metabolic intermediate biosynthesis; chorismate biosynthesis; chorismate from D-erythrose 4-phosphate and phosphoenolpyruvate: step 2/7. In terms of biological role, catalyzes the conversion of 3-deoxy-D-arabino-heptulosonate 7-phosphate (DAHP) to dehydroquinate (DHQ). In Ralstonia nicotianae (strain ATCC BAA-1114 / GMI1000) (Ralstonia solanacearum), this protein is 3-dehydroquinate synthase.